The following is a 289-amino-acid chain: tRNA pseudouridine synthase B (289 aa).

Asp-38 serves as the catalytic Nucleophile.

It belongs to the pseudouridine synthase TruB family. Type 1 subfamily.

The catalysed reaction is uridine(55) in tRNA = pseudouridine(55) in tRNA. Responsible for synthesis of pseudouridine from uracil-55 in the psi GC loop of transfer RNAs. The sequence is that of tRNA pseudouridine synthase B from Clostridium acetobutylicum (strain ATCC 824 / DSM 792 / JCM 1419 / IAM 19013 / LMG 5710 / NBRC 13948 / NRRL B-527 / VKM B-1787 / 2291 / W).